The chain runs to 255 residues: Phosphate import ATP-binding protein PstB (255 aa).

The ABC transporter domain occupies 9-250 (IAVQNLNFYY…PKIQRTEDYI (242 aa)). 41 to 48 (GPSGCGKS) contributes to the ATP binding site.

It belongs to the ABC transporter superfamily. Phosphate importer (TC 3.A.1.7) family. In terms of assembly, the complex is composed of two ATP-binding proteins (PstB), two transmembrane proteins (PstC and PstA) and a solute-binding protein (PstS).

It localises to the cell inner membrane. The catalysed reaction is phosphate(out) + ATP + H2O = ADP + 2 phosphate(in) + H(+). Part of the ABC transporter complex PstSACB involved in phosphate import. Responsible for energy coupling to the transport system. The sequence is that of Phosphate import ATP-binding protein PstB from Haemophilus influenzae (strain 86-028NP).